A 447-amino-acid polypeptide reads, in one-letter code: Adenylosuccinate synthetase (447 aa).

GTP contacts are provided by residues Gly-12 to Lys-18 and Gly-40 to Thr-42. Catalysis depends on Asp-13, which acts as the Proton acceptor. Mg(2+) contacts are provided by Asp-13 and Gly-40. IMP contacts are provided by residues Asp-13–Lys-16, Asn-38–His-41, Thr-128, Arg-142, Gln-223, Thr-238, and Arg-302. His-41 serves as the catalytic Proton donor. Residue Thr-298 to Arg-304 coordinates substrate. Residues Arg-304, Lys-330 to Asp-332, and Ser-412 to Gly-414 contribute to the GTP site.

It belongs to the adenylosuccinate synthetase family. As to quaternary structure, homodimer. The cofactor is Mg(2+).

It localises to the cytoplasm. It carries out the reaction IMP + L-aspartate + GTP = N(6)-(1,2-dicarboxyethyl)-AMP + GDP + phosphate + 2 H(+). The protein operates within purine metabolism; AMP biosynthesis via de novo pathway; AMP from IMP: step 1/2. Functionally, plays an important role in the de novo pathway of purine nucleotide biosynthesis. Catalyzes the first committed step in the biosynthesis of AMP from IMP. The sequence is that of Adenylosuccinate synthetase from Thermosynechococcus vestitus (strain NIES-2133 / IAM M-273 / BP-1).